We begin with the raw amino-acid sequence, 136 residues long: Large ribosomal subunit protein uL16 (136 aa).

The protein belongs to the universal ribosomal protein uL16 family. As to quaternary structure, part of the 50S ribosomal subunit.

Functionally, binds 23S rRNA and is also seen to make contacts with the A and possibly P site tRNAs. This Aliivibrio fischeri (strain ATCC 700601 / ES114) (Vibrio fischeri) protein is Large ribosomal subunit protein uL16.